A 347-amino-acid chain; its full sequence is NADH-quinone oxidoreductase subunit H (347 aa).

Transmembrane regions (helical) follow at residues 13-33 (LIIA…VAYL), 50-70 (PNVV…KFVF), 82-102 (GVFL…WAVI), 115-135 (VGIL…IMGG), 161-181 (IGFV…TDIV), 198-218 (FLDW…ISAL), 248-268 (FLLF…LMTV), 286-306 (VPGI…FAMV), and 325-345 (VFLP…KVFG).

It belongs to the complex I subunit 1 family. In terms of assembly, NDH-1 is composed of 14 different subunits. Subunits NuoA, H, J, K, L, M, N constitute the membrane sector of the complex.

Its subcellular location is the cell inner membrane. It catalyses the reaction a quinone + NADH + 5 H(+)(in) = a quinol + NAD(+) + 4 H(+)(out). Its function is as follows. NDH-1 shuttles electrons from NADH, via FMN and iron-sulfur (Fe-S) centers, to quinones in the respiratory chain. The immediate electron acceptor for the enzyme in this species is believed to be ubiquinone. Couples the redox reaction to proton translocation (for every two electrons transferred, four hydrogen ions are translocated across the cytoplasmic membrane), and thus conserves the redox energy in a proton gradient. This subunit may bind ubiquinone. In Brucella abortus (strain 2308), this protein is NADH-quinone oxidoreductase subunit H.